An 857-amino-acid polypeptide reads, in one-letter code: Leucine--tRNA ligase (857 aa).

Residues 42–52 (PYPSGRLHMGH) carry the 'HIGH' region motif. A 'KMSKS' region motif is present at residues 617–621 (KMSKS). Lysine 620 serves as a coordination point for ATP.

It belongs to the class-I aminoacyl-tRNA synthetase family.

Its subcellular location is the cytoplasm. It catalyses the reaction tRNA(Leu) + L-leucine + ATP = L-leucyl-tRNA(Leu) + AMP + diphosphate. This is Leucine--tRNA ligase from Vibrio vulnificus (strain CMCP6).